Consider the following 290-residue polypeptide: Xyloglucan endotransglucosylase/hydrolase protein 9 (290 aa).

The first 26 residues, 1–26 (MVGMDLFKCVMMIMVLVVSCGEAVSG), serve as a signal peptide directing secretion. One can recognise a GH16 domain in the interval 27–215 (AKFDELYRSS…WSHAPFVASY (189 aa)). The N-linked (GlcNAc...) asparagine glycan is linked to Asn55. Glu101 (nucleophile) is an active-site residue. Glu105 serves as the catalytic Proton donor. Glu105 serves as a coordination point for xyloglucan. Residue Asn109 is glycosylated (N-linked (GlcNAc...) asparagine). Xyloglucan-binding positions include 118 to 120 (QTN), 128 to 130 (NRE), 194 to 195 (DW), and Gly199. 2 disulfide bridges follow: Cys223/Cys234 and Cys271/Cys284. Arg276 contacts xyloglucan.

It belongs to the glycosyl hydrolase 16 family. XTH group 1 subfamily. In terms of processing, contains at least one intrachain disulfide bond essential for its enzymatic activity. Highly expressed in shoot apices. In the vegetative and reproductive phases, it accumulates in the shoot apex region, where cell division is most active. In the reproductive phase, it is also expressed in flower buds, flower stalks and internodes bearing flowers.

Its subcellular location is the secreted. The protein localises to the cell wall. The protein resides in the extracellular space. It is found in the apoplast. It catalyses the reaction breaks a beta-(1-&gt;4) bond in the backbone of a xyloglucan and transfers the xyloglucanyl segment on to O-4 of the non-reducing terminal glucose residue of an acceptor, which can be a xyloglucan or an oligosaccharide of xyloglucan.. Functionally, catalyzes xyloglucan endohydrolysis (XEH) and/or endotransglycosylation (XET). Cleaves and religates xyloglucan polymers, an essential constituent of the primary cell wall, and thereby participates in cell wall construction of growing tissues. Involved in internodal cell elongation. This chain is Xyloglucan endotransglucosylase/hydrolase protein 9 (XTH9), found in Arabidopsis thaliana (Mouse-ear cress).